Consider the following 518-residue polypeptide: Probable glycosyltransferase At5g03795 (518 aa).

At 1-25 the chain is on the cytoplasmic side; that stretch reads MGDEDVDGKCKNMSACSSTTSYSTK. The helical; Signal-anchor for type II membrane protein transmembrane segment at 26-46 threads the bilayer; it reads LFLFMVPLVVISGFVFVNIGP. Topologically, residues 47-518 are lumenal; sequence KDSTSLLTSL…RRLNVKIREV (472 aa). N104, N113, N120, N282, and N320 each carry an N-linked (GlcNAc...) asparagine glycan.

It belongs to the glycosyltransferase 47 family.

The protein resides in the golgi apparatus membrane. Functionally, may be involved in cell wall biosynthesis. This is Probable glycosyltransferase At5g03795 from Arabidopsis thaliana (Mouse-ear cress).